A 363-amino-acid polypeptide reads, in one-letter code: Peptide chain release factor 1 (363 aa).

Q237 carries the post-translational modification N5-methylglutamine. Residues 286 to 296 (EKRRSAEESTR) show a composition bias toward basic and acidic residues. Residues 286–305 (EKRRSAEESTRRSLVASGDR) form a disordered region.

Belongs to the prokaryotic/mitochondrial release factor family. Methylated by PrmC. Methylation increases the termination efficiency of RF1.

It is found in the cytoplasm. Its function is as follows. Peptide chain release factor 1 directs the termination of translation in response to the peptide chain termination codons UAG and UAA. This chain is Peptide chain release factor 1, found in Shewanella baltica (strain OS155 / ATCC BAA-1091).